The chain runs to 929 residues: MTDYSKTVNLLESPFPMRGNLAKREPAWLKSWYEQKRYQKLREIAKGRPKFILHDGPPYANGDIHIGHAVNKILKDIIIRSKTQAGFDAPYVPGWDCHGLPIEVMVEKLHGKDMPKARFRELCREYAAEQIARQKKDFIRLGVLGDWDHPYLTMDFKTEADTVRMLGEIYKSGYLYRGAKPVQFCLDCGSSLAEAEVEYKDKVSPAIDVAYPFKDTAALAAAFGLAGIEGKAFAVIWTTTPWTLPASQAVSVGADVVYQLIDTPKGKLVLAKDLAEDALKRYGFSDGIAILAETTGDKLENLHMNHPFLERDIPMLNGDHVTTDAGTGLVHTAPAHGLEDYAVCNKYGIELYNPVNAEGRYIGETPRVAGMRVWEANPVILQWLEETGNLLASSKIEHSYAHCWRHKTPLIYRATGQWFVGMDKAGADGKTLRDKAIKAVDDTEFFPSWGRARLEAMIEGRPDWVVSRQRYWGTPMTFFVHKETGELHPNSAELLEKVALKIEEKGIEAWFSLDKSELLSAEDCENYDKLSDTMDVWFDSGSTHYSVVKQREELEWPADLYLEGSDQHRGWFQSSMLTGCASSMGRAPYKQLLTHGFVVDGEGKKMSKSIGNVVAPQEVYNEFGADILRLWAASTDYSGELAISKEILKRVTESYRRIRNTLSFLFANLSDFNPIEDAVQQADMVEIDRYALVLARRLQERLAGDYYPRYAFHFAVKEMVSFCSEDLGAFYLDILKDRLYTTKADSRARRSAQTALYHITRSLVLLIAPILCFTGEEAWDIIGGGEEDSVLFHTWHEFPTINEKTEAELVKKWTAIREAREAVTAAIEPLRADKTVGSSLQAEAEITAPEEMAGYLNALGEELRFAMLVSKAEVKVGSELAVAAKASDGEKCERCWHYTRDVGAVAGYETVCKRCAENVGGEGETRHYA.

Residues 58-68 (PYANGDIHIGH) carry the 'HIGH' region motif. Glu-563 is a binding site for L-isoleucyl-5'-AMP. A 'KMSKS' region motif is present at residues 605-609 (KMSKS). Lys-608 provides a ligand contact to ATP. The Zn(2+) site is built by Cys-892, Cys-895, Cys-912, and Cys-915.

This sequence belongs to the class-I aminoacyl-tRNA synthetase family. IleS type 1 subfamily. In terms of assembly, monomer. Requires Zn(2+) as cofactor.

The protein resides in the cytoplasm. The catalysed reaction is tRNA(Ile) + L-isoleucine + ATP = L-isoleucyl-tRNA(Ile) + AMP + diphosphate. Functionally, catalyzes the attachment of isoleucine to tRNA(Ile). As IleRS can inadvertently accommodate and process structurally similar amino acids such as valine, to avoid such errors it has two additional distinct tRNA(Ile)-dependent editing activities. One activity is designated as 'pretransfer' editing and involves the hydrolysis of activated Val-AMP. The other activity is designated 'posttransfer' editing and involves deacylation of mischarged Val-tRNA(Ile). This chain is Isoleucine--tRNA ligase, found in Neisseria meningitidis serogroup C (strain 053442).